We begin with the raw amino-acid sequence, 234 residues long: MQHWLDKLTDLTAIEGDGCILKTGLADVADHFGFTGYAYLHIQHKHIIAVTNYHHDWRSLYFDKKFDALDPVVKRARSRKQVFAWSGEQERPKLSEEERAFYAQAADFGIRSGITIPIRTANGSMSMFTLASERTAIPLDREIDAVAAAAAVGQLHARISFLRITPTAEDAAWLDPKEATYLRWIAVGKTMEEIADVEEVKYNSVRVKLREAMKRFDVRSKAHLTALAIKRKLI.

One can recognise an HTH luxR-type domain in the interval 167 to 232; the sequence is TAEDAAWLDP…HLTALAIKRK (66 aa). A DNA-binding region (H-T-H motif) is located at residues 191 to 210; the sequence is MEEIADVEEVKYNSVRVKLR.

Belongs to the autoinducer-regulated transcriptional regulatory protein family.

Positive regulation of conjugal transfer of Ti plasmids. This is Transcriptional activator protein TraR (traR) from Agrobacterium vitis (Rhizobium vitis).